Consider the following 1256-residue polypeptide: Protein flightless-1 (1256 aa).

LRR repeat units lie at residues 4–28, 29–51, 52–74, 75–99, 100–122, 124–145, 147–169, 171–192, 218–241, 243–264, 265–287, 289–312, 313–335, 336–358, and 360–381; these read LPFV…MRQM, SRVQ…LGHL, QKLE…LTEL, SCLR…LFHL, EELT…LERA, NLIV…LFIH, TDLL…TRRL, NLKT…QLPS, LANL…VYNV, TLVR…VELW, QRLE…LCKL, KLRR…IGKL, GALE…LCRC, GALK…IHLL, and GLDQ…PSEA. The interval 405–476 is disordered; that stretch reads AAVPPSMPSS…ESLKPKRWDE (72 aa). A compositionally biased stretch (basic and acidic residues) spans 431 to 476; sequence PRSEGDQDAAKVLKGMKDVAKDKDNEAGAVPEDGKPESLKPKRWDE. Gelsolin-like repeat units lie at residues 512-589, 633-703, 749-822, and 1168-1242; these read IEEV…EQFL, EPVA…AEFW, VELP…MQIF, and EKCA…SRRF.

This sequence belongs to the villin/gelsolin family. Found in ovaries, larval fat bodies, brain and adult thorax.

May play a key role in embryonic cellularization by interacting with both the cytoskeleton and other cellular components. Alternatively, it may play a structural role in indirect flight muscle. Vital for embryonic development. The sequence is that of Protein flightless-1 (fliI) from Drosophila melanogaster (Fruit fly).